Consider the following 128-residue polypeptide: UPF0102 protein KPN78578_35270 (128 aa).

The segment at 1–20 (MAQVPAGKNRSGQLSKQTGD) is disordered.

Belongs to the UPF0102 family.

The sequence is that of UPF0102 protein KPN78578_35270 from Klebsiella pneumoniae subsp. pneumoniae (strain ATCC 700721 / MGH 78578).